The sequence spans 710 residues: Solute carrier organic anion transporter family member 3A1 (710 aa).

Met1 bears the N-acetylmethionine mark. A compositionally biased stretch (gly residues) spans 1-15 (MQGKKPGGSSGGGRS). Residues 1 to 25 (MQGKKPGGSSGGGRSGELQGDEAQR) form a disordered region. Residues 1–40 (MQGKKPGGSSGGGRSGELQGDEAQRNKKKKKKVSCFSNIK) are Cytoplasmic-facing. The chain crosses the membrane as a helical span at residues 41–60 (IFLVSECALMLAQGTVGAYL). Residues 61–79 (VSVLTTLERRFNLQSADVG) are Extracellular-facing. The helical transmembrane segment at 80 to 100 (VIASSFEIGNLALILFVSYFG) threads the bilayer. Over 101 to 106 (ARGHRP) the chain is Cytoplasmic. A helical transmembrane segment spans residues 107-131 (RLIGCGGIVMALGALLSALPEFLTH). The Extracellular portion of the chain corresponds to 132 to 174 (QYKYEAGEIRWGAEGRDVCAANGSGGDEGPDPDLICRNRTATN). N-linked (GlcNAc...) asparagine glycans are attached at residues Asn153 and Asn169. The chain crosses the membrane as a helical span at residues 175–203 (MMYLLLIGAQVLLGIGATPVQPLGVSYID). Over 204-222 (DHVRRKDSSLYIGILFTML) the chain is Cytoplasmic. A helical transmembrane segment spans residues 223-243 (VFGPACGFILGSFCTKIYVDA). The Extracellular segment spans residues 244-261 (VFIDTSNLDITPDDPRWI). A helical transmembrane segment spans residues 262 to 286 (GAWWGGFLLCGALLFFSSLLMFGFP). The Cytoplasmic segment spans residues 287–344 (QSLPPHSEPAMESEQAMLSEREYERPKPSNGVLRHPLEPDSSASCFQQLRVIPKVTKH). The helical transmembrane segment at 345-366 (LLSNPVFTCIILAACMEIAVVA) threads the bilayer. Residues 367-386 (GFAAFLGKYLEQQFNLTTSS) are Extracellular-facing. Asn381 carries N-linked (GlcNAc...) asparagine glycosylation. A helical membrane pass occupies residues 387-410 (ANQLLGMTAIPCACLGIFLGGLLV). Over 411–414 (KKLS) the chain is Cytoplasmic. Residues 415 to 438 (LSALGAIRMAMLVNLVSTACYVSF) form a helical membrane-spanning segment. At 439-539 (LFLGCDTGPV…PGCQEAFLTF (101 aa)) the chain is on the extracellular side. Asn457 carries N-linked (GlcNAc...) asparagine glycosylation. One can recognise a Kazal-like domain in the interval 465–513 (LDPYSPCNNNCECQTDSFTPVCGADGITYLSACFAGCNSTNLTGCACLT). 3 disulfides stabilise this stretch: Cys471-Cys501, Cys477-Cys497, and Cys486-Cys511. Residues Asn502, Asn505, and Asn519 are each glycosylated (N-linked (GlcNAc...) asparagine). A helical transmembrane segment spans residues 540–562 (LCVMCICSLIGAMAQTPSVIILI). At 563-571 (RTVSPELKS) the chain is on the cytoplasmic side. The helical transmembrane segment at 572–597 (YALGVLFLLLRLLGFIPPPLIFGAGI) threads the bilayer. The Extracellular segment spans residues 598–630 (DSTCLFWSTFCGEQGACVLYDNVVYRYLYVSIA). A helical membrane pass occupies residues 631 to 648 (IALKSFAFILYTTTWQCL). Over 649-705 (RKNYKRYIKNHEGGLSTSEFFASTLTLDNLGRDPVPANQTHRTKFIYNLEDHEWCEN) the chain is Cytoplasmic.

Belongs to the organo anion transporter (TC 2.A.60) family. Generally the expression of isoform 1 is higher than that of isoform 2. As to expression, expressed in placental trophoblasts. Expressed in pancreas, kidney, liver, lung, brain, heart, cerebellum, peripheral blood leukocyte, colon, small intestine, ovary, testis, prostate, thyroid, thymus and spleen. Expressed in fetal brain, heart, kidney, liver, lung, skeletal muscle, spleen and pancreas. In testis, detected in spermatogonia at different stages and absent from Sertoli cells. Expressed in the choroid plexus epithelium, at the basolateral membrane. In brain, also very abundant in the gray matter of the frontal cortex, but not associated with neuronal cell bodies. Not detected in the white matter. In terms of tissue distribution, expressed in heart, brain, cerebellum, testis, lung, thyroid, spoleen and liver. In testis, primarily localized to the basal membrane of Sertoli cells and weakly expressed within the tubules. In testis, also present in spermatogonia at different stages. In brain, expressed in the choroid plexus epithelium, at the apical membrane as well as in the subapical intracellular vesicular compartments. In brain, also associated with neuronal bodies and axons in both the gray and the white matters of the frontal cortex.

The protein localises to the basolateral cell membrane. The protein resides in the apical cell membrane. It is found in the basal cell membrane. It carries out the reaction L-thyroxine(out) = L-thyroxine(in). The enzyme catalyses prostaglandin E1(out) = prostaglandin E1(in). It catalyses the reaction prostaglandin E2(out) = prostaglandin E2(in). The catalysed reaction is prostaglandin F2alpha(out) = prostaglandin F2alpha(in). It carries out the reaction (5Z,8Z,11Z,14Z)-eicosatetraenoate(out) = (5Z,8Z,11Z,14Z)-eicosatetraenoate(in). The enzyme catalyses taurocholate(out) = taurocholate(in). It catalyses the reaction glycocholate(out) = glycocholate(in). The catalysed reaction is estrone 3-sulfate(out) = estrone 3-sulfate(in). It carries out the reaction argipressin(out) = argipressin(in). Its activity is regulated as follows. Stimulated by extracellular acidic pH. Functionally, putative organic anion antiporter with apparent broad substrate specificity. Recognizes various substrates including thyroid hormone L-thyroxine, prostanoids such as prostaglandin E1 and E2, bile acids such as taurocholate, glycolate and glycochenodeoxycholate and peptide hormones such as L-arginine vasopressin, likely operating in a tissue-specific manner. The transport mechanism, its electrogenicity and potential tissue-specific counterions remain to be elucidated. The polypeptide is Solute carrier organic anion transporter family member 3A1 (SLCO3A1) (Homo sapiens (Human)).